A 102-amino-acid chain; its full sequence is N(4)-acetylcytidine amidohydrolase (102 aa).

Residues Thr6–Glu93 form the ASCH domain. Lys20 functions as the Proton acceptor in the catalytic mechanism. The active-site Nucleophile is Thr23. Glu73 (proton donor) is an active-site residue.

The protein belongs to the N(4)-acetylcytidine amidohydrolase family.

It carries out the reaction N(4)-acetylcytidine + H2O = cytidine + acetate + H(+). It catalyses the reaction N(4)-acetyl-2'-deoxycytidine + H2O = 2'-deoxycytidine + acetate + H(+). The catalysed reaction is N(4)-acetylcytosine + H2O = cytosine + acetate + H(+). Catalyzes the hydrolysis of N(4)-acetylcytidine (ac4C). In Serratia proteamaculans (strain 568), this protein is N(4)-acetylcytidine amidohydrolase.